Consider the following 403-residue polypeptide: S-adenosylmethionine synthase (403 aa).

His16 lines the ATP pocket. A Mg(2+)-binding site is contributed by Asp18. K(+) is bound at residue Glu44. Residues Glu57 and Gln100 each contribute to the L-methionine site. The flexible loop stretch occupies residues 100 to 110 (QSNDIAQGVDH). Residues 167–169 (DAK), 238–239 (RF), Asp247, 253–254 (RK), Ala270, and Lys274 contribute to the ATP site. L-methionine is bound at residue Asp247. Lys278 contacts L-methionine.

The protein belongs to the AdoMet synthase family. Homotetramer; dimer of dimers. The cofactor is Mg(2+). It depends on K(+) as a cofactor.

Its subcellular location is the cytoplasm. The enzyme catalyses L-methionine + ATP + H2O = S-adenosyl-L-methionine + phosphate + diphosphate. It participates in amino-acid biosynthesis; S-adenosyl-L-methionine biosynthesis; S-adenosyl-L-methionine from L-methionine: step 1/1. Functionally, catalyzes the formation of S-adenosylmethionine (AdoMet) from methionine and ATP. The overall synthetic reaction is composed of two sequential steps, AdoMet formation and the subsequent tripolyphosphate hydrolysis which occurs prior to release of AdoMet from the enzyme. The sequence is that of S-adenosylmethionine synthase from Verminephrobacter eiseniae (strain EF01-2).